Reading from the N-terminus, the 155-residue chain is Small ribosomal subunit protein bS6 (155 aa).

A disordered region spans residues 94-155 (EKHEEGPSAM…RPRRPREDRV (62 aa)).

The protein belongs to the bacterial ribosomal protein bS6 family.

Binds together with bS18 to 16S ribosomal RNA. The sequence is that of Small ribosomal subunit protein bS6 from Rhizobium johnstonii (strain DSM 114642 / LMG 32736 / 3841) (Rhizobium leguminosarum bv. viciae).